A 693-amino-acid polypeptide reads, in one-letter code: Elongation factor G (693 aa).

A tr-type G domain is found at 8–282 (EKTRNIGIMA…AVIDYLPSPL (275 aa)). GTP-binding positions include 17–24 (AHVDAGKT), 81–85 (DTPGH), and 135–138 (NKMD).

Belongs to the TRAFAC class translation factor GTPase superfamily. Classic translation factor GTPase family. EF-G/EF-2 subfamily.

It localises to the cytoplasm. Catalyzes the GTP-dependent ribosomal translocation step during translation elongation. During this step, the ribosome changes from the pre-translocational (PRE) to the post-translocational (POST) state as the newly formed A-site-bound peptidyl-tRNA and P-site-bound deacylated tRNA move to the P and E sites, respectively. Catalyzes the coordinated movement of the two tRNA molecules, the mRNA and conformational changes in the ribosome. This chain is Elongation factor G, found in Streptococcus gordonii (strain Challis / ATCC 35105 / BCRC 15272 / CH1 / DL1 / V288).